Consider the following 242-residue polypeptide: Probable transcriptional regulatory protein Bphy_2064 (242 aa).

Belongs to the TACO1 family.

The protein resides in the cytoplasm. This chain is Probable transcriptional regulatory protein Bphy_2064, found in Paraburkholderia phymatum (strain DSM 17167 / CIP 108236 / LMG 21445 / STM815) (Burkholderia phymatum).